Here is a 776-residue protein sequence, read N- to C-terminus: Protein translocase subunit SecA 2 (776 aa).

ATP is bound by residues glutamine 80, 98 to 102 (GEGKT), and aspartate 486.

Belongs to the SecA family. As to quaternary structure, monomer and homodimer. Part of the essential Sec protein translocation apparatus which comprises SecA, SecYEG and auxiliary proteins SecDF. Other proteins may also be involved.

The protein localises to the cell membrane. It localises to the cytoplasm. It carries out the reaction ATP + H2O + cellular proteinSide 1 = ADP + phosphate + cellular proteinSide 2.. In terms of biological role, part of the Sec protein translocase complex. Interacts with the SecYEG preprotein conducting channel. Has a central role in coupling the hydrolysis of ATP to the transfer of proteins into and across the cell membrane, serving as an ATP-driven molecular motor driving the stepwise translocation of polypeptide chains across the membrane. The sequence is that of Protein translocase subunit SecA 2 from Listeria innocua serovar 6a (strain ATCC BAA-680 / CLIP 11262).